A 262-amino-acid polypeptide reads, in one-letter code: Tritrans,polycis-undecaprenyl-diphosphate synthase (GGDP specific) (262 aa).

Residue Asp40 is part of the active site. Position 40 (Asp40) interacts with Mg(2+). Residues 41–44 (GNRR), Trp45, and 85–87 (SAE) each bind substrate. The active-site Proton acceptor is the Asn88. Substrate contacts are provided by residues Arg92, Arg211, and 217–219 (RIS). A Mg(2+)-binding site is contributed by Glu230.

Belongs to the UPP synthase family. In terms of assembly, homodimer. The cofactor is Mg(2+).

It catalyses the reaction geranylgeranyl diphosphate + 7 isopentenyl diphosphate = tri-trans,hepta-cis-undecaprenyl diphosphate + 7 diphosphate. Its function is as follows. Generates tritrans,heptacis-undecaprenyl diphosphate from isopentenyl pyrophosphate (IPP) and geranylgeranyl diphosphate. It is probably the precursor of glycosyl carrier lipids. This chain is Tritrans,polycis-undecaprenyl-diphosphate synthase (GGDP specific) (uppS), found in Sulfolobus acidocaldarius (strain ATCC 33909 / DSM 639 / JCM 8929 / NBRC 15157 / NCIMB 11770).